The following is a 439-amino-acid chain: Glutamyl-tRNA reductase (439 aa).

Substrate-binding positions include 48 to 51, Ser107, 112 to 114, and Gln118; these read TCNR and EPQ. The active-site Nucleophile is Cys49. 187 to 192 provides a ligand contact to NADP(+); it reads GAGEMA.

It belongs to the glutamyl-tRNA reductase family. As to quaternary structure, homodimer.

It carries out the reaction (S)-4-amino-5-oxopentanoate + tRNA(Glu) + NADP(+) = L-glutamyl-tRNA(Glu) + NADPH + H(+). Its pathway is porphyrin-containing compound metabolism; protoporphyrin-IX biosynthesis; 5-aminolevulinate from L-glutamyl-tRNA(Glu): step 1/2. Functionally, catalyzes the NADPH-dependent reduction of glutamyl-tRNA(Glu) to glutamate 1-semialdehyde (GSA). In Maridesulfovibrio salexigens (strain ATCC 14822 / DSM 2638 / NCIMB 8403 / VKM B-1763) (Desulfovibrio salexigens), this protein is Glutamyl-tRNA reductase.